A 513-amino-acid chain; its full sequence is GMP synthase [glutamine-hydrolyzing] (513 aa).

The Glutamine amidotransferase type-1 domain maps to 7 to 198 (LIVVVDFGGQ…LFNIAGCRGD (192 aa)). The Nucleophile role is filled by C84. Active-site residues include H172 and E174. The region spanning 199-388 (WTTESFITRQ…LGVPEEIVGR (190 aa)) is the GMPS ATP-PPase domain. Residue 226 to 232 (SGGVDSS) coordinates ATP.

In terms of assembly, homodimer.

It catalyses the reaction XMP + L-glutamine + ATP + H2O = GMP + L-glutamate + AMP + diphosphate + 2 H(+). The protein operates within purine metabolism; GMP biosynthesis; GMP from XMP (L-Gln route): step 1/1. In terms of biological role, catalyzes the synthesis of GMP from XMP. The polypeptide is GMP synthase [glutamine-hydrolyzing] (Symbiobacterium thermophilum (strain DSM 24528 / JCM 14929 / IAM 14863 / T)).